Consider the following 224-residue polypeptide: Putative adhesin RF_1314 (224 aa).

The N-terminal stretch at 1–22 is a signal peptide; that stretch reads MKKLLLIAATSATILSSSISFA.

This Rickettsia felis (strain ATCC VR-1525 / URRWXCal2) (Rickettsia azadi) protein is Putative adhesin RF_1314.